Here is a 368-residue protein sequence, read N- to C-terminus: Glutaminyl-peptide cyclotransferase (368 aa).

A signal peptide spans 1-23 (MAGERRDSKAAAFFCLAWALCLA). Residue Asn-53 is glycosylated (N-linked (GlcNAc...) asparagine). Cys-143 and Cys-169 are joined by a disulfide. Position 164 (Asp-164) interacts with Zn(2+). Glu-207 functions as the Proton acceptor in the catalytic mechanism. Glu-208 is a binding site for Zn(2+). The Proton acceptor role is filled by Asp-254. Asn-292 carries an N-linked (GlcNAc...) asparagine glycan. Residue His-336 participates in Zn(2+) binding. A glycan (N-linked (GlcNAc...) asparagine) is linked at Asn-352.

It belongs to the glutaminyl-peptide cyclotransferase family. Expressed by the venom gland.

The protein resides in the secreted. The enzyme catalyses N-terminal L-glutaminyl-[peptide] = N-terminal 5-oxo-L-prolyl-[peptide] + NH4(+). Its function is as follows. Responsible for the biosynthesis of pyroglutamyl peptides. Has a bias against acidic and tryptophan residues adjacent to the N-terminal glutaminyl residue and a lack of importance of chain length after the second residue. Also catalyzes N-terminal pyroglutamate formation. The polypeptide is Glutaminyl-peptide cyclotransferase (QPCT) (Boiga dendrophila (Mangrove snake)).